Consider the following 1394-residue polypeptide: Kinesin-like protein KIF27 (1394 aa).

The region spanning 5 to 341 (PIKVAVRIRP…LKYANRARNI (337 aa)) is the Kinesin motor domain. Position 84 to 91 (84 to 91 (GQTGSGKT)) interacts with ATP. Coiled-coil stretches lie at residues 352-418 (QADR…IEQA) and 493-554 (QVVF…ELAK). 2 disordered regions span residues 551-583 (ELAK…PHTA) and 642-664 (FSDN…SRSH). Residues 555 to 565 (RSSSMPTSTKE) show a composition bias toward polar residues. The segment covering 571–580 (PDARAPEKRP) has biased composition (basic and acidic residues). Ser-643, Ser-646, Ser-672, Ser-675, and Ser-704 each carry phosphoserine. Positions 709 to 980 (LQKLRTSELI…NKKLRSSQAL (272 aa)) form a coiled coil. Position 999 is a phosphoserine (Ser-999). 3 coiled-coil regions span residues 1010–1078 (TEEK…SIQN), 1118–1152 (NKVI…HELE), and 1187–1226 (QDGE…RLKD). Residues 1267-1280 (TENTKLNGREKEVD) are compositionally biased toward basic and acidic residues. The tract at residues 1267–1340 (TENTKLNGRE…SQSPPPPQLQ (74 aa)) is disordered. 2 stretches are compositionally biased toward polar residues: residues 1281-1295 (NSSS…TQQI) and 1310-1320 (APSSGQLQSSA). Phosphoserine is present on residues Ser-1365 and Ser-1387. Positions 1375–1394 (SLGAGVRSVTADSLEEPEES) are disordered.

The protein belongs to the TRAFAC class myosin-kinesin ATPase superfamily. Kinesin family. KIF27 subfamily. As to quaternary structure, interacts with STK36.

The protein localises to the cytoplasm. It localises to the cytoskeleton. It is found in the cell projection. Its subcellular location is the cilium. In terms of biological role, plays an essential role in motile ciliogenesis. The sequence is that of Kinesin-like protein KIF27 (Kif27) from Rattus norvegicus (Rat).